We begin with the raw amino-acid sequence, 217 residues long: Large ribosomal subunit protein uL1 (217 aa).

Belongs to the universal ribosomal protein uL1 family.

The protein is Large ribosomal subunit protein uL1 (RpL10A) of Spodoptera frugiperda (Fall armyworm).